A 321-amino-acid polypeptide reads, in one-letter code: F-box protein At4g35930 (321 aa).

The span at 1–13 shows a compositional bias: basic and acidic residues; that stretch reads MGKVSPKDLDSKT. Residues 1–23 are disordered; sequence MGKVSPKDLDSKTSVRKKKLKSS. The 49-residue stretch at 159–207 folds into the F-box domain; it reads ESQLESLPMDLLVKIVCHLHHDQLKAVFHVSQRIRMATILARQYHFNYT. The segment at 228-258 is disordered; that stretch reads WPFRRGDGNPTMVSSPHTPKAPKHAPRPPSR.

The chain is F-box protein At4g35930 from Arabidopsis thaliana (Mouse-ear cress).